Here is a 454-residue protein sequence, read N- to C-terminus: Bifunctional protein GlmU (454 aa).

Residues 1–226 (MALNVVILAA…AIEVEGANNR (226 aa)) are pyrophosphorylase. UDP-N-acetyl-alpha-D-glucosamine-binding positions include 8–11 (LAAG), Lys-22, Gln-73, 78–79 (GT), 100–102 (YGD), Gly-137, Glu-151, Asn-166, and Asn-224. Asp-102 lines the Mg(2+) pocket. Residue Asn-224 coordinates Mg(2+). Positions 227 to 247 (VQLAQLERAYQAREAEKLMIA) are linker. An N-acetyltransferase region spans residues 248–454 (GANLRDPSRI…GWQRPVKIKK (207 aa)). Residues Arg-330 and Lys-348 each contribute to the UDP-N-acetyl-alpha-D-glucosamine site. His-360 acts as the Proton acceptor in catalysis. Residues Tyr-363 and Asn-374 each coordinate UDP-N-acetyl-alpha-D-glucosamine. Residues Ala-377, 383–384 (NY), Ser-402, Ala-420, and Arg-437 each bind acetyl-CoA.

This sequence in the N-terminal section; belongs to the N-acetylglucosamine-1-phosphate uridyltransferase family. It in the C-terminal section; belongs to the transferase hexapeptide repeat family. In terms of assembly, homotrimer. Requires Mg(2+) as cofactor.

It localises to the cytoplasm. The enzyme catalyses alpha-D-glucosamine 1-phosphate + acetyl-CoA = N-acetyl-alpha-D-glucosamine 1-phosphate + CoA + H(+). It carries out the reaction N-acetyl-alpha-D-glucosamine 1-phosphate + UTP + H(+) = UDP-N-acetyl-alpha-D-glucosamine + diphosphate. The protein operates within nucleotide-sugar biosynthesis; UDP-N-acetyl-alpha-D-glucosamine biosynthesis; N-acetyl-alpha-D-glucosamine 1-phosphate from alpha-D-glucosamine 6-phosphate (route II): step 2/2. Its pathway is nucleotide-sugar biosynthesis; UDP-N-acetyl-alpha-D-glucosamine biosynthesis; UDP-N-acetyl-alpha-D-glucosamine from N-acetyl-alpha-D-glucosamine 1-phosphate: step 1/1. It functions in the pathway bacterial outer membrane biogenesis; LPS lipid A biosynthesis. Functionally, catalyzes the last two sequential reactions in the de novo biosynthetic pathway for UDP-N-acetylglucosamine (UDP-GlcNAc). The C-terminal domain catalyzes the transfer of acetyl group from acetyl coenzyme A to glucosamine-1-phosphate (GlcN-1-P) to produce N-acetylglucosamine-1-phosphate (GlcNAc-1-P), which is converted into UDP-GlcNAc by the transfer of uridine 5-monophosphate (from uridine 5-triphosphate), a reaction catalyzed by the N-terminal domain. The polypeptide is Bifunctional protein GlmU (Shewanella oneidensis (strain ATCC 700550 / JCM 31522 / CIP 106686 / LMG 19005 / NCIMB 14063 / MR-1)).